The sequence spans 318 residues: Thymidylate synthase (318 aa).

DUMP-binding positions include Arg25 and 180–181; that span reads RR. Catalysis depends on Cys200, which acts as the Nucleophile. DUMP is bound by residues 220–223, Asn231, and 261–263; these read RSGD and HIY. Asp223 provides a ligand contact to (6R)-5,10-methylene-5,6,7,8-tetrahydrofolate. Residue Ala317 participates in (6R)-5,10-methylene-5,6,7,8-tetrahydrofolate binding.

Belongs to the thymidylate synthase family. Bacterial-type ThyA subfamily. As to quaternary structure, homodimer.

Its subcellular location is the cytoplasm. It catalyses the reaction dUMP + (6R)-5,10-methylene-5,6,7,8-tetrahydrofolate = 7,8-dihydrofolate + dTMP. The protein operates within pyrimidine metabolism; dTTP biosynthesis. Its function is as follows. Catalyzes the reductive methylation of 2'-deoxyuridine-5'-monophosphate (dUMP) to 2'-deoxythymidine-5'-monophosphate (dTMP) while utilizing 5,10-methylenetetrahydrofolate (mTHF) as the methyl donor and reductant in the reaction, yielding dihydrofolate (DHF) as a by-product. This enzymatic reaction provides an intracellular de novo source of dTMP, an essential precursor for DNA biosynthesis. The sequence is that of Thymidylate synthase from Lactobacillus delbrueckii subsp. bulgaricus (strain ATCC BAA-365 / Lb-18).